The sequence spans 146 residues: VQWAAEEKQLITGLWGKVNVADCGAEALARLLIVYPWTQRFFASFGNLSSATAVLGNPMVRAHGKKVLTSFGEAVKNLDNIKNTFAQLSELHCDKLHVDPENFRLLGDILIVVLAAHFGKDFSPDCQAAWQKLVRAVAHALARKYH.

One can recognise a Globin domain in the interval 2–146 (QWAAEEKQLI…VAHALARKYH (145 aa)). 2 residues coordinate heme b: histidine 63 and histidine 92.

It belongs to the globin family. As to quaternary structure, heterotetramer of two alpha chains and two beta chains. In terms of tissue distribution, red blood cells.

In terms of biological role, involved in oxygen transport from the lung to the various peripheral tissues. The chain is Hemoglobin subunit beta (HBB) from Accipiter gentilis (Northern goshawk).